The following is a 1077-amino-acid chain: Serine/threonine-protein kinase sel-5 (1077 aa).

A Protein kinase domain is found at 47–317 (VTIEKQIAEG…IYQTSVLAFE (271 aa)). Residues 53 to 61 (IAEGGFAIV) and K75 each bind ATP. D178 functions as the Proton acceptor in the catalytic mechanism. Disordered regions lie at residues 347-444 (MRDG…TDGS), 488-554 (GFTD…SQVV), 616-813 (ELDS…TNPF), and 920-1077 (LISV…PTDL). Residues 369–399 (IQSSSKMASLSQQVPSISNISMPSGSGTVET) show a composition bias toward polar residues. The span at 491–515 (DLDKPALPRDRAQTDGKRRLPHESD) shows a compositional bias: basic and acidic residues. Over residues 541–554 (SSQQTTSKTSSQVV) the composition is skewed to low complexity. Polar residues predominate over residues 638 to 648 (LTVSTSSSAQP). The span at 655-679 (TDEDDERQLLSETDEEEKYEIDEKE) shows a compositional bias: acidic residues. Basic and acidic residues-rich tracts occupy residues 697–708 (DEQRMNDRRRYS) and 739–751 (DSRRGGDTSHDED). Residues 770-780 (EDDGLEDDDDH) are compositionally biased toward acidic residues. Over residues 799-810 (GTSTPHTQNPIT) the composition is skewed to polar residues. The span at 927-936 (TDPPPPPLPK) shows a compositional bias: pro residues. Polar residues predominate over residues 941–950 (ASPTQETTAT). Residues 960–969 (KLLKKEKKKE) are compositionally biased toward basic residues. Over residues 970–989 (KKDGKKDKLKLEEYREKGSS) the composition is skewed to basic and acidic residues. Over residues 1054-1067 (LTGKNASFVNTSFQ) the composition is skewed to polar residues.

It belongs to the protein kinase superfamily. Ser/Thr protein kinase family. The cofactor is Mg(2+).

It is found in the cytoplasm. The enzyme catalyses L-seryl-[protein] + ATP = O-phospho-L-seryl-[protein] + ADP + H(+). The catalysed reaction is L-threonyl-[protein] + ATP = O-phospho-L-threonyl-[protein] + ADP + H(+). Its function is as follows. Serine/threonine-protein kinase which may play a role in lin-12-mediated cell-fate decisions. This Caenorhabditis elegans protein is Serine/threonine-protein kinase sel-5.